The chain runs to 319 residues: Ribosomal protein uL3 glutamine methyltransferase (319 aa).

This sequence belongs to the protein N5-glutamine methyltransferase family. PrmB subfamily.

It catalyses the reaction L-glutaminyl-[ribosomal protein uL3] + S-adenosyl-L-methionine = N(5)-methyl-L-glutaminyl-[ribosomal protein uL3] + S-adenosyl-L-homocysteine + H(+). Its function is as follows. Methylates large ribosomal subunit protein uL3 on a specific glutamine residue. This Bradyrhizobium diazoefficiens (strain JCM 10833 / BCRC 13528 / IAM 13628 / NBRC 14792 / USDA 110) protein is Ribosomal protein uL3 glutamine methyltransferase.